Reading from the N-terminus, the 166-residue chain is SsrA-binding protein (166 aa).

The tract at residues 146–166 (KRAAEKEKQSKKDVKAAMERY) is disordered.

It belongs to the SmpB family.

It is found in the cytoplasm. Required for rescue of stalled ribosomes mediated by trans-translation. Binds to transfer-messenger RNA (tmRNA), required for stable association of tmRNA with ribosomes. tmRNA and SmpB together mimic tRNA shape, replacing the anticodon stem-loop with SmpB. tmRNA is encoded by the ssrA gene; the 2 termini fold to resemble tRNA(Ala) and it encodes a 'tag peptide', a short internal open reading frame. During trans-translation Ala-aminoacylated tmRNA acts like a tRNA, entering the A-site of stalled ribosomes, displacing the stalled mRNA. The ribosome then switches to translate the ORF on the tmRNA; the nascent peptide is terminated with the 'tag peptide' encoded by the tmRNA and targeted for degradation. The ribosome is freed to recommence translation, which seems to be the essential function of trans-translation. The protein is SsrA-binding protein of Synechococcus sp. (strain CC9605).